The sequence spans 127 residues: Large ribosomal subunit protein bL20 (127 aa).

It belongs to the bacterial ribosomal protein bL20 family.

Functionally, binds directly to 23S ribosomal RNA and is necessary for the in vitro assembly process of the 50S ribosomal subunit. It is not involved in the protein synthesizing functions of that subunit. This is Large ribosomal subunit protein bL20 from Bifidobacterium adolescentis (strain ATCC 15703 / DSM 20083 / NCTC 11814 / E194a).